Here is a 328-residue protein sequence, read N- to C-terminus: 4-hydroxy-3-methylbut-2-enyl diphosphate reductase (328 aa).

Residue C24 coordinates [4Fe-4S] cluster. (2E)-4-hydroxy-3-methylbut-2-enyl diphosphate contacts are provided by H55 and H88. Positions 55 and 88 each coordinate dimethylallyl diphosphate. Residues H55 and H88 each coordinate isopentenyl diphosphate. Residue C110 participates in [4Fe-4S] cluster binding. Position 138 (H138) interacts with (2E)-4-hydroxy-3-methylbut-2-enyl diphosphate. H138 contacts dimethylallyl diphosphate. Residue H138 participates in isopentenyl diphosphate binding. The active-site Proton donor is the E140. T178 is a (2E)-4-hydroxy-3-methylbut-2-enyl diphosphate binding site. A [4Fe-4S] cluster-binding site is contributed by C208. S236, S237, N238, and S279 together coordinate (2E)-4-hydroxy-3-methylbut-2-enyl diphosphate. S236, S237, N238, and S279 together coordinate dimethylallyl diphosphate. S236, S237, N238, and S279 together coordinate isopentenyl diphosphate.

This sequence belongs to the IspH family. It depends on [4Fe-4S] cluster as a cofactor.

The catalysed reaction is isopentenyl diphosphate + 2 oxidized [2Fe-2S]-[ferredoxin] + H2O = (2E)-4-hydroxy-3-methylbut-2-enyl diphosphate + 2 reduced [2Fe-2S]-[ferredoxin] + 2 H(+). It catalyses the reaction dimethylallyl diphosphate + 2 oxidized [2Fe-2S]-[ferredoxin] + H2O = (2E)-4-hydroxy-3-methylbut-2-enyl diphosphate + 2 reduced [2Fe-2S]-[ferredoxin] + 2 H(+). Its pathway is isoprenoid biosynthesis; dimethylallyl diphosphate biosynthesis; dimethylallyl diphosphate from (2E)-4-hydroxy-3-methylbutenyl diphosphate: step 1/1. The protein operates within isoprenoid biosynthesis; isopentenyl diphosphate biosynthesis via DXP pathway; isopentenyl diphosphate from 1-deoxy-D-xylulose 5-phosphate: step 6/6. In terms of biological role, catalyzes the conversion of 1-hydroxy-2-methyl-2-(E)-butenyl 4-diphosphate (HMBPP) into a mixture of isopentenyl diphosphate (IPP) and dimethylallyl diphosphate (DMAPP). Acts in the terminal step of the DOXP/MEP pathway for isoprenoid precursor biosynthesis. In Ehrlichia ruminantium (strain Welgevonden), this protein is 4-hydroxy-3-methylbut-2-enyl diphosphate reductase.